The chain runs to 78 residues: Probable cytochrome c oxidase subunit 6B (78 aa).

Residues 21–64 form the CHCH domain; sequence TKHCWANYVDYYGCVKHYNGDNSKCQTFFNSMNSLCPAAWISEW. The short motif at 24–34 is the Cx9C motif element; that stretch reads CWANYVDYYGC. Intrachain disulfides connect C24–C56 and C34–C45. Positions 45 to 56 match the Cx10C motif motif; the sequence is CQTFFNSMNSLC.

This sequence belongs to the cytochrome c oxidase subunit 6B family. As to quaternary structure, component of the cytochrome c oxidase (complex IV, CIV), a multisubunit enzyme composed of a catalytic core of 3 subunits and several supernumerary subunits. The complex exists as a monomer or a dimer and forms supercomplexes (SCs) in the inner mitochondrial membrane with ubiquinol-cytochrome c oxidoreductase (cytochrome b-c1 complex, complex III, CIII).

It localises to the mitochondrion inner membrane. The protein operates within energy metabolism; oxidative phosphorylation. In terms of biological role, component of the cytochrome c oxidase, the last enzyme in the mitochondrial electron transport chain which drives oxidative phosphorylation. The respiratory chain contains 3 multisubunit complexes succinate dehydrogenase (complex II, CII), ubiquinol-cytochrome c oxidoreductase (cytochrome b-c1 complex, complex III, CIII) and cytochrome c oxidase (complex IV, CIV), that cooperate to transfer electrons derived from NADH and succinate to molecular oxygen, creating an electrochemical gradient over the inner membrane that drives transmembrane transport and the ATP synthase. Cytochrome c oxidase is the component of the respiratory chain that catalyzes the reduction of oxygen to water. Electrons originating from reduced cytochrome c in the intermembrane space (IMS) are transferred via the dinuclear copper A center (CU(A)) of subunit 2 and heme A of subunit 1 to the active site in subunit 1, a binuclear center (BNC) formed by heme A3 and copper B (CU(B)). The BNC reduces molecular oxygen to 2 water molecules using 4 electrons from cytochrome c in the IMS and 4 protons from the mitochondrial matrix. This is Probable cytochrome c oxidase subunit 6B from Dictyostelium discoideum (Social amoeba).